The chain runs to 824 residues: Leucine--tRNA ligase (824 aa).

A 'HIGH' region motif is present at residues 42–52 (PYPSGRIHMGH). Positions 581-585 (KMSKS) match the 'KMSKS' region motif. ATP is bound at residue K584.

It belongs to the class-I aminoacyl-tRNA synthetase family.

The protein resides in the cytoplasm. The enzyme catalyses tRNA(Leu) + L-leucine + ATP = L-leucyl-tRNA(Leu) + AMP + diphosphate. The polypeptide is Leucine--tRNA ligase (Geobacter sulfurreducens (strain ATCC 51573 / DSM 12127 / PCA)).